Here is a 120-residue protein sequence, read N- to C-terminus: Ribonuclease P protein component (120 aa).

Belongs to the RnpA family. Consists of a catalytic RNA component (M1 or rnpB) and a protein subunit.

It catalyses the reaction Endonucleolytic cleavage of RNA, removing 5'-extranucleotides from tRNA precursor.. RNaseP catalyzes the removal of the 5'-leader sequence from pre-tRNA to produce the mature 5'-terminus. It can also cleave other RNA substrates such as 4.5S RNA. The protein component plays an auxiliary but essential role in vivo by binding to the 5'-leader sequence and broadening the substrate specificity of the ribozyme. The sequence is that of Ribonuclease P protein component from Azoarcus sp. (strain BH72).